A 329-amino-acid chain; its full sequence is Sex comb on midleg-like protein 1 (329 aa).

Ser138 and Ser238 each carry phosphoserine. The disordered stretch occupies residues 138–157 (SPTLPVSRRENNSPSNLPRP). Positions 258-325 (WSVEAVVLFL…YYIDRLKQGK (68 aa)) constitute an SAM domain.

This sequence belongs to the SCM family.

The protein resides in the nucleus. Functionally, putative Polycomb group (PcG) protein. PcG proteins act by forming multiprotein complexes, which are required to maintain the transcriptionally repressive state of homeotic genes throughout development. May be involved in spermatogenesis during sexual maturation. The sequence is that of Sex comb on midleg-like protein 1 (SCML1) from Pan troglodytes (Chimpanzee).